Here is a 152-residue protein sequence, read N- to C-terminus: Small ribosomal subunit protein uS15 (152 aa).

The segment covering 1–10 (MARMYARRRG) has biased composition (basic residues). A disordered region spans residues 1 to 24 (MARMYARRRGTSSSVRPYRKEAPE).

Belongs to the universal ribosomal protein uS15 family. Part of the 30S ribosomal subunit.

The protein is Small ribosomal subunit protein uS15 of Methanoculleus marisnigri (strain ATCC 35101 / DSM 1498 / JR1).